We begin with the raw amino-acid sequence, 130 residues long: Interferon alpha-inducible protein 27-like protein 2 (130 aa).

Helical transmembrane passes span 8–28 (AAVG…AMGF), 43–63 (MSAA…VATL), and 66–86 (VGAA…GSVL). A disordered region spans residues 93-130 (SPSSSLPAEPEAKEDEARENVPQGEPPKPPLKSEKHEE).

Belongs to the IFI6/IFI27 family.

It localises to the mitochondrion membrane. Its function is as follows. Plays a role in the apoptotic process and has a pro-apoptotic activity. The polypeptide is Interferon alpha-inducible protein 27-like protein 2 (Homo sapiens (Human)).